The following is a 390-amino-acid chain: Aspartate beta-hydroxylase domain-containing protein 1 (390 aa).

The tract at residues methionine 1–proline 54 is disordered. Topologically, residues methionine 1 to proline 72 are cytoplasmic. Over residues glycine 41–asparagine 51 the composition is skewed to gly residues. The helical transmembrane segment at leucine 73–cysteine 95 threads the bilayer. Topologically, residues tyrosine 96–proline 390 are lumenal. The interval arginine 116–glutamate 143 is disordered. Positions proline 128–glycine 137 are enriched in gly residues. Serine 129 carries the post-translational modification Phosphoserine.

Belongs to the aspartyl/asparaginyl beta-hydroxylase family.

It is found in the membrane. The sequence is that of Aspartate beta-hydroxylase domain-containing protein 1 (ASPHD1) from Homo sapiens (Human).